A 273-amino-acid chain; its full sequence is Bifunctional protein FolD (273 aa).

NADP(+) is bound by residues 155 to 157, S180, and T221; that span reads GRS.

Belongs to the tetrahydrofolate dehydrogenase/cyclohydrolase family. Homodimer.

The catalysed reaction is (6R)-5,10-methylene-5,6,7,8-tetrahydrofolate + NADP(+) = (6R)-5,10-methenyltetrahydrofolate + NADPH. It catalyses the reaction (6R)-5,10-methenyltetrahydrofolate + H2O = (6R)-10-formyltetrahydrofolate + H(+). Its pathway is one-carbon metabolism; tetrahydrofolate interconversion. In terms of biological role, catalyzes the oxidation of 5,10-methylenetetrahydrofolate to 5,10-methenyltetrahydrofolate and then the hydrolysis of 5,10-methenyltetrahydrofolate to 10-formyltetrahydrofolate. In Coprothermobacter proteolyticus (strain ATCC 35245 / DSM 5265 / OCM 4 / BT), this protein is Bifunctional protein FolD.